The following is a 481-amino-acid chain: Trigger factor (481 aa).

One can recognise a PPIase FKBP-type domain in the interval 174-261 (GDIAVVSFKG…LKDLKEKELP (88 aa)). The disordered stretch occupies residues 435–481 (VKEKTTKASQASKTTKAKKTTTKTTKATKTATKTTKATKTQNKKEKK). The span at 456–474 (TKTTKATKTATKTTKATKT) shows a compositional bias: low complexity.

The protein belongs to the FKBP-type PPIase family. Tig subfamily.

Its subcellular location is the cytoplasm. The enzyme catalyses [protein]-peptidylproline (omega=180) = [protein]-peptidylproline (omega=0). Its function is as follows. Involved in protein export. Acts as a chaperone by maintaining the newly synthesized protein in an open conformation. Functions as a peptidyl-prolyl cis-trans isomerase. The sequence is that of Trigger factor from Prochlorococcus marinus (strain MIT 9312).